The chain runs to 641 residues: Fibrinogen alpha-2 chain (641 aa).

Residues 1–23 (MTLRGVSMVLTWCLLVSKAWSSG) form the signal peptide. Residues 107 to 226 (SVSDVSNQVV…IVHESFSVER (120 aa)) adopt a coiled-coil conformation. Residues 228-327 (DARSLHPYSG…QKTEELSFKK (100 aa)) are disordered. Residue asparagine 271 is glycosylated (N-linked (GlcNAc...) asparagine). The segment covering 279 to 289 (VDERSKVEKDV) has biased composition (basic and acidic residues). Positions 293-317 (STSSVSSSSSSSSSSSSTSSTISST) are enriched in low complexity. In terms of domain architecture, Fibrinogen C-terminal spans 395–636 (RTNLSEYIDC…RTAVRFRRVQ (242 aa)). Asparagine 397 is a glycosylation site (N-linked (GlcNAc...) asparagine). An intrachain disulfide couples cysteine 404 to cysteine 435. Residue asparagine 458 is glycosylated (N-linked (GlcNAc...) asparagine). Cysteine 571 and cysteine 584 are disulfide-bonded.

Heterohexamer; disulfide linked. Contains 2 sets of 3 non-identical chains (alpha, beta and gamma). The 2 heterotrimers are in head to head conformation with the N-termini in a small central domain. In terms of processing, conversion of fibrinogen to fibrin is triggered by thrombin, which cleaves fibrinopeptides A and B from alpha and beta chains, and thus exposes the N-terminal polymerization sites responsible for the formation of the soft clot. The soft clot is converted into the hard clot by factor XIIIA which catalyzes the epsilon-(gamma-glutamyl)lysine cross-linking between gamma chains (stronger) and between alpha chains (weaker) of different monomers. Forms F13A-mediated cross-links between a glutamine and the epsilon-amino group of a lysine residue, forming fibronectin-fibrinogen heteropolymers.

The protein localises to the secreted. In terms of biological role, fibrinogen has a double function: yielding monomers that polymerize into fibrin and acting as a cofactor in platelet aggregation. This chain is Fibrinogen alpha-2 chain, found in Petromyzon marinus (Sea lamprey).